Consider the following 336-residue polypeptide: 3-isopropylmalate dehydrogenase (336 aa).

Arg87, Arg97, Arg121, and Asp211 together coordinate substrate. Asp211, Asp235, and Asp239 together coordinate Mg(2+). NAD(+) is bound at residue Gly271–Asp283.

The protein belongs to the isocitrate and isopropylmalate dehydrogenases family. LeuB type 2 subfamily. In terms of assembly, homodimer. Mg(2+) is required as a cofactor. Requires Mn(2+) as cofactor.

The protein resides in the cytoplasm. The catalysed reaction is (2R,3S)-3-isopropylmalate + NAD(+) = 4-methyl-2-oxopentanoate + CO2 + NADH. It functions in the pathway amino-acid biosynthesis; L-leucine biosynthesis; L-leucine from 3-methyl-2-oxobutanoate: step 3/4. Catalyzes the oxidation of 3-carboxy-2-hydroxy-4-methylpentanoate (3-isopropylmalate) to 3-carboxy-4-methyl-2-oxopentanoate. The product decarboxylates to 4-methyl-2 oxopentanoate. The sequence is that of 3-isopropylmalate dehydrogenase from Mycobacterium leprae (strain Br4923).